Here is a 310-residue protein sequence, read N- to C-terminus: Malate dehydrogenase (310 aa).

Residues Gly7–Gly12 and Asp32 contribute to the NAD(+) site. Positions 81 and 87 each coordinate substrate. NAD(+) contacts are provided by residues Asn94 and Val117 to Asn119. Substrate contacts are provided by Asn119 and Arg150. Residue His174 is the Proton acceptor of the active site.

The protein belongs to the LDH/MDH superfamily. MDH type 3 family.

The catalysed reaction is (S)-malate + NAD(+) = oxaloacetate + NADH + H(+). In terms of biological role, catalyzes the reversible oxidation of malate to oxaloacetate. This Pelodictyon phaeoclathratiforme (strain DSM 5477 / BU-1) protein is Malate dehydrogenase.